We begin with the raw amino-acid sequence, 321 residues long: Replication factor C small subunit (321 aa).

G46 to T53 contributes to the ATP binding site.

Belongs to the activator 1 small subunits family. RfcS subfamily. As to quaternary structure, heterohexamer composed of four small subunits (RfcS) and two large subunits (RfcL).

In terms of biological role, part of the RFC clamp loader complex which loads the PCNA sliding clamp onto DNA. The complex possesses DNA-dependent ATPase activity which is further stimulated by PCNA. In conjunction with PCNA stimulates DNA synthesis by PolB, relieving inhibition by replication protein A (RPA). The chain is Replication factor C small subunit (rfcS) from Methanothermobacter thermautotrophicus (strain ATCC 29096 / DSM 1053 / JCM 10044 / NBRC 100330 / Delta H) (Methanobacterium thermoautotrophicum).